A 400-amino-acid chain; its full sequence is Glycine betaine/proline betaine transport system ATP-binding protein ProV (400 aa).

The region spanning 29–265 (LSKEQILEKT…PANDYVRTFF (237 aa)) is the ABC transporter domain. 61–68 (GLSGSGKS) contributes to the ATP binding site. CBS domains are found at residues 280-341 (ARRS…GIEA) and 343-400 (LIDD…GNNG).

It belongs to the ABC transporter superfamily. As to quaternary structure, the complex is composed of two ATP-binding proteins (ProV), two transmembrane proteins (ProW) and a solute-binding protein (ProX).

The protein resides in the cell inner membrane. In terms of biological role, part of the ProU ABC transporter complex involved in glycine betaine and proline betaine uptake. Probably responsible for energy coupling to the transport system. In Salmonella typhimurium (strain LT2 / SGSC1412 / ATCC 700720), this protein is Glycine betaine/proline betaine transport system ATP-binding protein ProV.